Consider the following 108-residue polypeptide: UPF0102 protein Sama_3355 (108 aa).

This sequence belongs to the UPF0102 family.

This chain is UPF0102 protein Sama_3355, found in Shewanella amazonensis (strain ATCC BAA-1098 / SB2B).